The following is a 334-amino-acid chain: Glyceraldehyde-3-phosphate dehydrogenase 1 (334 aa).

Residues 12–13 (RI), aspartate 35, and arginine 79 each bind NAD(+). Residues 152 to 154 (SCT), threonine 183, arginine 198, 211 to 212 (SG), and arginine 234 contribute to the D-glyceraldehyde 3-phosphate site. Cysteine 153 functions as the Nucleophile in the catalytic mechanism. Residue asparagine 315 coordinates NAD(+).

The protein belongs to the glyceraldehyde-3-phosphate dehydrogenase family. Homotetramer.

The protein localises to the cytoplasm. It carries out the reaction D-glyceraldehyde 3-phosphate + phosphate + NAD(+) = (2R)-3-phospho-glyceroyl phosphate + NADH + H(+). It functions in the pathway carbohydrate degradation; glycolysis; pyruvate from D-glyceraldehyde 3-phosphate: step 1/5. With respect to regulation, resistant to pentalenolactone. Its function is as follows. Catalyzes the oxidative phosphorylation of glyceraldehyde 3-phosphate (G3P) to 1,3-bisphosphoglycerate (BPG) using the cofactor NAD. The first reaction step involves the formation of a hemiacetal intermediate between G3P and a cysteine residue, and this hemiacetal intermediate is then oxidized to a thioester, with concomitant reduction of NAD to NADH. The reduced NADH is then exchanged with the second NAD, and the thioester is attacked by a nucleophilic inorganic phosphate to produce BPG. The protein is Glyceraldehyde-3-phosphate dehydrogenase 1 (gap1) of Streptomyces avermitilis (strain ATCC 31267 / DSM 46492 / JCM 5070 / NBRC 14893 / NCIMB 12804 / NRRL 8165 / MA-4680).